We begin with the raw amino-acid sequence, 602 residues long: Elongation factor 4 (602 aa).

One can recognise a tr-type G domain in the interval D6–K188. GTP-binding positions include D18–T23 and N135–D138.

It belongs to the TRAFAC class translation factor GTPase superfamily. Classic translation factor GTPase family. LepA subfamily.

It is found in the cell inner membrane. It catalyses the reaction GTP + H2O = GDP + phosphate + H(+). Required for accurate and efficient protein synthesis under certain stress conditions. May act as a fidelity factor of the translation reaction, by catalyzing a one-codon backward translocation of tRNAs on improperly translocated ribosomes. Back-translocation proceeds from a post-translocation (POST) complex to a pre-translocation (PRE) complex, thus giving elongation factor G a second chance to translocate the tRNAs correctly. Binds to ribosomes in a GTP-dependent manner. This chain is Elongation factor 4, found in Brucella anthropi (strain ATCC 49188 / DSM 6882 / CCUG 24695 / JCM 21032 / LMG 3331 / NBRC 15819 / NCTC 12168 / Alc 37) (Ochrobactrum anthropi).